A 295-amino-acid chain; its full sequence is UDP-N-acetylenolpyruvoylglucosamine reductase (295 aa).

Positions 27–194 (GVGGEAEVWF…TRVRLKLRRS (168 aa)) constitute an FAD-binding PCMH-type domain. The active site involves Arg174. The active-site Proton donor is the Cys221. Glu287 is a catalytic residue.

The protein belongs to the MurB family. It depends on FAD as a cofactor.

The protein localises to the cytoplasm. It carries out the reaction UDP-N-acetyl-alpha-D-muramate + NADP(+) = UDP-N-acetyl-3-O-(1-carboxyvinyl)-alpha-D-glucosamine + NADPH + H(+). It participates in cell wall biogenesis; peptidoglycan biosynthesis. Cell wall formation. In Deinococcus geothermalis (strain DSM 11300 / CIP 105573 / AG-3a), this protein is UDP-N-acetylenolpyruvoylglucosamine reductase.